A 366-amino-acid polypeptide reads, in one-letter code: L-idonate 5-dehydrogenase (366 aa).

Positions 56, 81, 111, 114, 117, 125, and 167 each coordinate Zn(2+).

Belongs to the zinc-containing alcohol dehydrogenase family. Zn(2+) is required as a cofactor.

It catalyses the reaction L-idonate + NAD(+) = 5-dehydro-D-gluconate + NADH + H(+). It functions in the pathway carbohydrate acid metabolism; L-idonate degradation. Involved in the catabolism of ascorbate to tartrate. The enzyme has no activity with NADP(+). This is L-idonate 5-dehydrogenase from Vitis vinifera (Grape).